A 350-amino-acid chain; its full sequence is Ribosomal RNA large subunit methyltransferase M (350 aa).

S-adenosyl-L-methionine is bound by residues 217 to 220 (APGG), Asp236, Asp256, and Asp272. Lys301 functions as the Proton acceptor in the catalytic mechanism.

The protein belongs to the class I-like SAM-binding methyltransferase superfamily. RNA methyltransferase RlmE family. RlmM subfamily. Monomer.

The protein localises to the cytoplasm. It carries out the reaction cytidine(2498) in 23S rRNA + S-adenosyl-L-methionine = 2'-O-methylcytidine(2498) in 23S rRNA + S-adenosyl-L-homocysteine + H(+). Functionally, catalyzes the 2'-O-methylation at nucleotide C2498 in 23S rRNA. The polypeptide is Ribosomal RNA large subunit methyltransferase M (Teredinibacter turnerae (strain ATCC 39867 / T7901)).